A 68-amino-acid chain; its full sequence is MPQLDTSTWFTIIMAMLPTLYLITQLKLLSMNYYQPPLTKNPNLQTHNTCWRPKWTKTYLPHSQPQQS.

Residues 8–24 form a helical membrane-spanning segment; that stretch reads TWFTIIMAMLPTLYLIT. The residue at position 54 (K54) is an N6-acetyllysine; alternate. K54 is subject to N6-succinyllysine; alternate. Position 57 is an N6-acetyllysine (K57).

The protein belongs to the ATPase protein 8 family. As to quaternary structure, component of the ATP synthase complex composed at least of ATP5F1A/subunit alpha, ATP5F1B/subunit beta, ATP5MC1/subunit c (homooctomer), MT-ATP6/subunit a, MT-ATP8/subunit 8, ATP5ME/subunit e, ATP5MF/subunit f, ATP5MG/subunit g, ATP5MK/subunit k, ATP5MJ/subunit j, ATP5F1C/subunit gamma, ATP5F1D/subunit delta, ATP5F1E/subunit epsilon, ATP5PF/subunit F6, ATP5PB/subunit b, ATP5PD/subunit d, ATP5PO/subunit OSCP. ATP synthase complex consists of a soluble F(1) head domain (subunits alpha(3) and beta(3)) - the catalytic core - and a membrane F(0) domain - the membrane proton channel (subunits c, a, 8, e, f, g, k and j). These two domains are linked by a central stalk (subunits gamma, delta, and epsilon) rotating inside the F1 region and a stationary peripheral stalk (subunits F6, b, d, and OSCP). Interacts with PRICKLE3.

The protein localises to the mitochondrion membrane. Its function is as follows. Subunit 8, of the mitochondrial membrane ATP synthase complex (F(1)F(0) ATP synthase or Complex V) that produces ATP from ADP in the presence of a proton gradient across the membrane which is generated by electron transport complexes of the respiratory chain. ATP synthase complex consist of a soluble F(1) head domain - the catalytic core - and a membrane F(1) domain - the membrane proton channel. These two domains are linked by a central stalk rotating inside the F(1) region and a stationary peripheral stalk. During catalysis, ATP synthesis in the catalytic domain of F(1) is coupled via a rotary mechanism of the central stalk subunits to proton translocation. In vivo, can only synthesize ATP although its ATP hydrolase activity can be activated artificially in vitro. Part of the complex F(0) domain. This Papio hamadryas (Hamadryas baboon) protein is ATP synthase F(0) complex subunit 8.